The primary structure comprises 3801 residues: Lysosomal-trafficking regulator (3801 aa).

Residues 148–173 (KITHRYSVRDARKTQLSTSDSEANSD) form a disordered region. S164 carries the post-translational modification Phosphoserine. The residue at position 165 (T165) is a Phosphothreonine. S166 carries the post-translational modification Phosphoserine. Residues 662-700 (ELSSSLSSPSYRFQGILPSSGSEDLLWKWDALKAYQNFV) form a WD 1 repeat. The span at 1181–1190 (AMTEKSHQSA) shows a compositional bias: basic and acidic residues. 2 disordered regions span residues 1181 to 1203 (AMTEKSHQSAEELSSQPGDFSEE) and 1221 to 1256 (YEADSESNPEDGETQDDGVDLKSETEGFSASSSPND). Over residues 1221 to 1238 (YEADSESNPEDGETQDDG) the composition is skewed to acidic residues. The span at 1246–1256 (EGFSASSSPND) shows a compositional bias: polar residues. 2 positions are modified to phosphoserine: S1509 and S1510. The stretch at 1582–1626 (SQENIFLPSKWQHLVLTYLQQPQGKRRIHGKISIWVSGQRKPDVT) is one WD 2 repeat. 5 positions are modified to phosphoserine: S2105, S2124, S2213, S2217, and S2264. Residues 2205–2215 (KQLGAEPRSED) show a composition bias toward basic and acidic residues. The disordered stretch occupies residues 2205–2224 (KQLGAEPRSEDDSPGDESCP). One can recognise a BEACH-type PH domain in the interval 3009–3115 (AASESIRVNR…VRDDVYHNIL (107 aa)). The BEACH domain occupies 3120–3422 (PNLLEYGNIT…QLFHMAHVSR (303 aa)). 5 WD repeats span residues 3563–3602 (SQQYQVTSCAWVPDSCQLFTGSKCGVITAYTNRFTSSTPS), 3614–3653 (GHTEEITSLFVCKPYSILISVSRDGTCIIWDLNRLCYVQS), 3656–3699 (GHKS…VGHV), 3700–3744 (HCRE…PVRE), and 3749–3788 (KSNKPIISLTFSCDGHHLYTANSDGTVIAWCRKDQQRLKQ).

In terms of assembly, interacts with CPAP, LIP8 and ZNF521. In terms of tissue distribution, abundantly expressed in adult and fetal thymus, peripheral blood leukocytes, bone marrow and several regions of the adult brain.

The protein resides in the cytoplasm. Functionally, adapter protein that regulates and/or fission of intracellular vesicles such as lysosomes. Might regulate trafficking of effectors involved in exocytosis. In cytotoxic T-cells and natural killer (NK) cells, has role in the regulation of size, number and exocytosis of lytic granules. In macrophages and dendritic cells, regulates phagosome maturation by controlling the conversion of early phagosomal compartments into late phagosomes. In macrophages and dendritic cells, specifically involved in TLR3- and TLR4-induced production of pro-inflammatory cytokines by regulating the endosomal TLR3- TICAM1/TRIF and TLR4- TICAM1/TRIF signaling pathways. The protein is Lysosomal-trafficking regulator (LYST) of Homo sapiens (Human).